The following is a 261-amino-acid chain: Cytochrome c oxidase subunit 3 (261 aa).

The Mitochondrial matrix segment spans residues 1-15; sequence MTHQSHAYHMVKPSP. A helical transmembrane segment spans residues 16-34; the sequence is WPLTGALSALLMTSGLAMW. At 35 to 40 the chain is on the mitochondrial intermembrane side; that stretch reads FHFHSM. A helical membrane pass occupies residues 41–66; that stretch reads TLLMLGLLTNTLTMYQWWRDVTREST. Over 67 to 72 the chain is Mitochondrial matrix; sequence YQGHHT. Residues 73–105 traverse the membrane as a helical segment; it reads PPVQKGLRYGMILFITSEVFFFAGFFWAFYHSS. Topologically, residues 106–128 are mitochondrial intermembrane; that stretch reads LAPTPQLGGHWPPTGITPLNPLE. Residues 129-152 form a helical membrane-spanning segment; sequence VPLLNTSVLLASGVSITWAHHSLM. Over 153 to 155 the chain is Mitochondrial matrix; sequence ENN. Residues 156-183 form a helical membrane-spanning segment; sequence RNQMIQALLITILLGLYFTLLQASEYFE. At 184 to 190 the chain is on the mitochondrial intermembrane side; the sequence is SPFTISD. The chain crosses the membrane as a helical span at residues 191 to 223; the sequence is GIYGSTFFVATGFHGLHVIIGSTFLTICFIRQL. The Mitochondrial matrix portion of the chain corresponds to 224-232; sequence MFHFTSKHH. The chain crosses the membrane as a helical span at residues 233–256; that stretch reads FGFEAAAWYWHFVDVVWLFLYVSI. Over 257 to 261 the chain is Mitochondrial intermembrane; sequence YWWGS.

It belongs to the cytochrome c oxidase subunit 3 family. In terms of assembly, component of the cytochrome c oxidase (complex IV, CIV), a multisubunit enzyme composed of 14 subunits. The complex is composed of a catalytic core of 3 subunits MT-CO1, MT-CO2 and MT-CO3, encoded in the mitochondrial DNA, and 11 supernumerary subunits COX4I1 (or COX4I2), COX5A, COX5B, COX6A1 (or COX6A2), COX6B1 (or COX6B2), COX6C, COX7A2 (or COX7A1), COX7B, COX7C, COX8A and NDUFA4, which are encoded in the nuclear genome. The complex exists as a monomer or a dimer and forms supercomplexes (SCs) in the inner mitochondrial membrane with NADH-ubiquinone oxidoreductase (complex I, CI) and ubiquinol-cytochrome c oxidoreductase (cytochrome b-c1 complex, complex III, CIII), resulting in different assemblies (supercomplex SCI(1)III(2)IV(1) and megacomplex MCI(2)III(2)IV(2)).

The protein localises to the mitochondrion inner membrane. The catalysed reaction is 4 Fe(II)-[cytochrome c] + O2 + 8 H(+)(in) = 4 Fe(III)-[cytochrome c] + 2 H2O + 4 H(+)(out). Functionally, component of the cytochrome c oxidase, the last enzyme in the mitochondrial electron transport chain which drives oxidative phosphorylation. The respiratory chain contains 3 multisubunit complexes succinate dehydrogenase (complex II, CII), ubiquinol-cytochrome c oxidoreductase (cytochrome b-c1 complex, complex III, CIII) and cytochrome c oxidase (complex IV, CIV), that cooperate to transfer electrons derived from NADH and succinate to molecular oxygen, creating an electrochemical gradient over the inner membrane that drives transmembrane transport and the ATP synthase. Cytochrome c oxidase is the component of the respiratory chain that catalyzes the reduction of oxygen to water. Electrons originating from reduced cytochrome c in the intermembrane space (IMS) are transferred via the dinuclear copper A center (CU(A)) of subunit 2 and heme A of subunit 1 to the active site in subunit 1, a binuclear center (BNC) formed by heme A3 and copper B (CU(B)). The BNC reduces molecular oxygen to 2 water molecules using 4 electrons from cytochrome c in the IMS and 4 protons from the mitochondrial matrix. This is Cytochrome c oxidase subunit 3 (MT-CO3) from Homo sapiens (Human).